A 288-amino-acid chain; its full sequence is uncharacterized protein (288 aa).

Positions 1–12 (MTEGRCAQHPDG) are enriched in basic and acidic residues. The interval 1–20 (MTEGRCAQHPDGLDVQDVCD) is disordered.

It belongs to the class IV-like SAM-binding methyltransferase superfamily. RNA methyltransferase TrmH family.

This is an uncharacterized protein from Mycobacterium tuberculosis (strain ATCC 25618 / H37Rv).